Here is a 205-residue protein sequence, read N- to C-terminus: Molybdenum cofactor guanylyltransferase (205 aa).

GTP-binding positions include 14-16 (LAG), Lys-27, Asp-77, and Asp-107. A Mg(2+)-binding site is contributed by Asp-107.

The protein belongs to the MobA family. Monomer. It depends on Mg(2+) as a cofactor.

It is found in the cytoplasm. It catalyses the reaction Mo-molybdopterin + GTP + H(+) = Mo-molybdopterin guanine dinucleotide + diphosphate. In terms of biological role, transfers a GMP moiety from GTP to Mo-molybdopterin (Mo-MPT) cofactor (Moco or molybdenum cofactor) to form Mo-molybdopterin guanine dinucleotide (Mo-MGD) cofactor. The sequence is that of Molybdenum cofactor guanylyltransferase from Burkholderia ambifaria (strain MC40-6).